Reading from the N-terminus, the 527-residue chain is Protein PyrBI (527 aa).

An aspartate carbamoyltransferase region spans residues 1-342; it reads MKRDFLGRTL…MFGGALEAPF (342 aa). The tract at residues 343–357 is linker; the sequence is DTSKKEEKPEEDFII. An aspartate carbamoyltransferase regulatory region region spans residues 368 to 527; that stretch reads VQKEGKRGIK…PHSFEEIWSI (160 aa). C483, C488, C512, and C515 together coordinate Zn(2+).

In the N-terminal section; belongs to the aspartate/ornithine carbamoyltransferase superfamily. ATCase family. This sequence in the C-terminal section; belongs to the PyrI family.

It carries out the reaction carbamoyl phosphate + L-aspartate = N-carbamoyl-L-aspartate + phosphate + H(+). Its pathway is pyrimidine metabolism; UMP biosynthesis via de novo pathway; (S)-dihydroorotate from bicarbonate: step 2/3. In Thermotoga maritima (strain ATCC 43589 / DSM 3109 / JCM 10099 / NBRC 100826 / MSB8), this protein is Protein PyrBI (pyrBI).